Consider the following 139-residue polypeptide: Nucleoside diphosphate kinase (139 aa).

ATP-binding residues include Lys10, Phe58, Arg86, Thr92, Arg104, and Asn114. The active-site Pros-phosphohistidine intermediate is the His117.

It belongs to the NDK family. Homotetramer. Mg(2+) is required as a cofactor.

It is found in the cytoplasm. It catalyses the reaction a 2'-deoxyribonucleoside 5'-diphosphate + ATP = a 2'-deoxyribonucleoside 5'-triphosphate + ADP. It carries out the reaction a ribonucleoside 5'-diphosphate + ATP = a ribonucleoside 5'-triphosphate + ADP. Its function is as follows. Major role in the synthesis of nucleoside triphosphates other than ATP. The ATP gamma phosphate is transferred to the NDP beta phosphate via a ping-pong mechanism, using a phosphorylated active-site intermediate. This Nocardia farcinica (strain IFM 10152) protein is Nucleoside diphosphate kinase.